The primary structure comprises 564 residues: Ferric/cupric reductase transmembrane component 2 (564 aa).

Transmembrane regions (helical) follow at residues 10–30 (TLGS…LFLL) and 66–86 (FIFL…LVML). N106 carries N-linked (GlcNAc...) asparagine glycosylation. A helical membrane pass occupies residues 110–130 (VAARLGYLSCGLFFVSYFFSL). The Ferric oxidoreductase domain maps to 114–229 (LGYLSCGLFF…TCSVLIIFLI (116 aa)). Heme-binding residues include H150 and H164. Helical transmembrane passes span 152–172 (WLSV…MIFS), 184–204 (ISIY…ASLP), and 210–230 (FFEW…FLIW). 2 residues coordinate heme: H218 and H232. Residues 254–410 (RLFRSIWNRS…DGPYGTTSNV (157 aa)) form the FAD-binding FR-type domain. N261 is a glycosylation site (N-linked (GlcNAc...) asparagine). 310–316 (HPFTLAS) lines the FAD pocket. The N-linked (GlcNAc...) asparagine glycan is linked to N350. An NAD(+)-binding site is contributed by 419-427 (LIAGGVGFS). N442, N496, and N548 each carry an N-linked (GlcNAc...) asparagine glycan.

Belongs to the ferric reductase (FRE) family. It depends on FAD as a cofactor. Heme is required as a cofactor.

It localises to the cell membrane. It is found in the endoplasmic reticulum membrane. It carries out the reaction 2 a Fe(II)-siderophore + NADP(+) + H(+) = 2 a Fe(III)-siderophore + NADPH. In terms of biological role, metalloreductase responsible for reducing extracellular iron and copper prior to import. Catalyzes the reductive uptake of Fe(3+)-salts and Fe(3+) bound to catecholate or hydroxamate siderophores. Fe(3+) is reduced to Fe(2+), which then dissociates from the siderophore and can be imported by the high-affinity Fe(2+) transport complex in the plasma membrane. Also participates in Cu(2+) reduction and Cu(+) uptake. This is Ferric/cupric reductase transmembrane component 2 (frp2) from Schizosaccharomyces pombe (strain 972 / ATCC 24843) (Fission yeast).